We begin with the raw amino-acid sequence, 619 residues long: Type VI secretion system component TssF1 (619 aa).

As to quaternary structure, interacts with TssA1.

Its function is as follows. Core component of the H1 type VI (H1-T6SS) secretion system that plays a role in the release of toxins targeting both eukaryotic and prokaryotic species. This chain is Type VI secretion system component TssF1, found in Pseudomonas aeruginosa (strain ATCC 15692 / DSM 22644 / CIP 104116 / JCM 14847 / LMG 12228 / 1C / PRS 101 / PAO1).